A 1414-amino-acid chain; its full sequence is DNA-directed RNA polymerase subunit beta' (1414 aa).

Zn(2+) contacts are provided by cysteine 70, cysteine 72, cysteine 85, and cysteine 88. Mg(2+) contacts are provided by aspartate 460, aspartate 462, and aspartate 464. Cysteine 814, cysteine 888, cysteine 895, and cysteine 898 together coordinate Zn(2+). Low complexity predominate over residues 1392–1403 (EQALSEALKSSA). Residues 1392-1414 (EQALSEALKSSAPQEAKAAQKDE) are disordered.

The protein belongs to the RNA polymerase beta' chain family. The RNAP catalytic core consists of 2 alpha, 1 beta, 1 beta' and 1 omega subunit. When a sigma factor is associated with the core the holoenzyme is formed, which can initiate transcription. Requires Mg(2+) as cofactor. Zn(2+) serves as cofactor.

The catalysed reaction is RNA(n) + a ribonucleoside 5'-triphosphate = RNA(n+1) + diphosphate. Its function is as follows. DNA-dependent RNA polymerase catalyzes the transcription of DNA into RNA using the four ribonucleoside triphosphates as substrates. This chain is DNA-directed RNA polymerase subunit beta', found in Coxiella burnetii (strain Dugway 5J108-111).